The following is a 927-amino-acid chain: LPS-assembly protein LptD (927 aa).

An N-terminal signal peptide occupies residues 1–22; sequence MALKSPAFRKKFPLLVTGSLLA. Residues 60–100 form a disordered region; the sequence is LPPRPVHSTASVSSNGTVTSESSSSGEQVAGPQLVTEAKGK. The segment covering 70–86 has biased composition (low complexity); the sequence is SVSSNGTVTSESSSSGE.

This sequence belongs to the LptD family. As to quaternary structure, component of the lipopolysaccharide transport and assembly complex. Interacts with LptE and LptA.

The protein localises to the cell outer membrane. Functionally, together with LptE, is involved in the assembly of lipopolysaccharide (LPS) at the surface of the outer membrane. This chain is LPS-assembly protein LptD, found in Pseudomonas syringae pv. tomato (strain ATCC BAA-871 / DC3000).